A 159-amino-acid chain; its full sequence is Phosphopantetheine adenylyltransferase (159 aa).

Residue serine 8 participates in substrate binding. Residues 8–9 (SF) and histidine 16 each bind ATP. Residues lysine 40, threonine 72, and arginine 86 each coordinate substrate. Residues 87–89 (GLR), glutamate 97, and 122–128 (HSFVSSS) each bind ATP.

Belongs to the bacterial CoaD family. Homohexamer. Requires Mg(2+) as cofactor.

The protein localises to the cytoplasm. The catalysed reaction is (R)-4'-phosphopantetheine + ATP + H(+) = 3'-dephospho-CoA + diphosphate. It functions in the pathway cofactor biosynthesis; coenzyme A biosynthesis; CoA from (R)-pantothenate: step 4/5. Functionally, reversibly transfers an adenylyl group from ATP to 4'-phosphopantetheine, yielding dephospho-CoA (dPCoA) and pyrophosphate. This is Phosphopantetheine adenylyltransferase from Synechococcus sp. (strain JA-3-3Ab) (Cyanobacteria bacterium Yellowstone A-Prime).